Reading from the N-terminus, the 106-residue chain is Urease subunit beta (106 aa).

It belongs to the urease beta subunit family. Heterotrimer of UreA (gamma), UreB (beta) and UreC (alpha) subunits. Three heterotrimers associate to form the active enzyme.

The protein localises to the cytoplasm. It carries out the reaction urea + 2 H2O + H(+) = hydrogencarbonate + 2 NH4(+). The protein operates within nitrogen metabolism; urea degradation; CO(2) and NH(3) from urea (urease route): step 1/1. The protein is Urease subunit beta of Parasynechococcus marenigrum (strain WH8102).